Here is a 312-residue protein sequence, read N- to C-terminus: Malate dehydrogenase (312 aa).

NAD(+) contacts are provided by residues 7 to 13 (GAAGGIG) and aspartate 34. 2 residues coordinate substrate: arginine 81 and arginine 87. Residues asparagine 94 and 117–119 (ITN) each bind NAD(+). Substrate is bound by residues asparagine 119 and arginine 153. The Proton acceptor role is filled by histidine 177. Methionine 227 contacts NAD(+).

It belongs to the LDH/MDH superfamily. MDH type 1 family. In terms of assembly, homodimer.

It catalyses the reaction (S)-malate + NAD(+) = oxaloacetate + NADH + H(+). Its function is as follows. Catalyzes the reversible oxidation of malate to oxaloacetate. This Pectobacterium carotovorum subsp. carotovorum (strain PC1) protein is Malate dehydrogenase.